Reading from the N-terminus, the 367-residue chain is Polygalacturonase (367 aa).

A signal peptide spans 1–19 (MSIRLIAVLSAASIAVTSA). A disulfide bond links Cys-27 and Cys-42. The N-linked (GlcNAc...) asparagine glycan is linked to Asn-185. The PbH1 1 repeat unit spans residues 187–208 (TDQLTIEDTVVKNQDDCIAVNQ). Residue Asp-201 is the Proton donor of the active site. Cys-203 and Cys-219 are oxidised to a cystine. Residue His-223 is part of the active site. The PbH1 2 repeat unit spans residues 240–261 (VRNVTFSNSVVRKSRNGIHIKT). N-linked (GlcNAc...) asparagine glycosylation is present at Asn-242. Cys-334 and Cys-339 are oxidised to a cystine. 2 N-linked (GlcNAc...) asparagine glycosylation sites follow: Asn-343 and Asn-357. Cys-358 and Cys-367 form a disulfide bridge.

The protein belongs to the glycosyl hydrolase 28 family. In terms of tissue distribution, expressed in larval carcasses and gut, and adult gut.

The protein resides in the secreted. It localises to the cell wall. It carries out the reaction (1,4-alpha-D-galacturonosyl)n+m + H2O = (1,4-alpha-D-galacturonosyl)n + (1,4-alpha-D-galacturonosyl)m.. The chain is Polygalacturonase from Phaedon cochleariae (Mustard beetle).